The following is a 135-amino-acid chain: Large ribosomal subunit protein uL16c (135 aa).

Belongs to the universal ribosomal protein uL16 family. Part of the 50S ribosomal subunit.

The protein resides in the plastid. The protein localises to the chloroplast. This is Large ribosomal subunit protein uL16c from Morus indica (Mulberry).